A 432-amino-acid polypeptide reads, in one-letter code: Cyclic GMP-AMP synthase (432 aa).

Residue 110–115 (QGSFQY) participates in GTP binding. Mg(2+) is bound by residues Asp-129 and Asp-131. Arg-180 contributes to the ATP binding site. Position 191 (Asp-191) interacts with Mg(2+). Residue Ser-255 coordinates ATP. Lys-283, Ser-297, and Asp-344 together coordinate GTP. A Glycyl cysteine dithioester (Gly-Cys) (interchain with C-13 in Cap2) cross-link involves residue Gly-432. Gly-432 participates in a covalent cross-link: Glycyl cysteine dithioester (Gly-Cys) (interchain with C-493 in Cap2). Residue Gly-432 forms a Glycyl cysteine dithioester (Gly-Cys) (interchain with C-513 in Cap2) linkage. Residue Gly-432 forms a Glycyl lysine isopeptide (Gly-Lys) (interchain with K-? in acceptor proteins) linkage.

It belongs to the CD-NTase family. A02 subfamily. As to quaternary structure, a Cap2 dimer is bound on either side by a DncV monomer. The cofactor is Mg(2+). In bacteria expressing capV-dncV-cap2-cap3, this protein is conjugated to about 130 cellular proteins by Cap2, most of which are involved in metabolism; more conjugated protein is found in the absence of Cap3. Most conjugation occurs via an isopeptide bond with the epsilon-amine of Lys on the target protein, but Cys-conjugation also occurs, including to Cap2. Conjugation or deconjugation from cellular proteins does not change the DncV activity in vitro, but does so in vivo during infection. Post-translationally, (Microbial infection) During phage T4 infection is conjugated to at least 2 T4 proteins (fibritin (wac) and dexA.2).

It carries out the reaction GTP + ATP = 3',3'-cGAMP + 2 diphosphate. With respect to regulation, primed for activation by Cap2 which conjugates it to cellular proteins. cGAMP production is induced in phage T4 infected cells in a manner that requires Cap2 and Cap3, as well as a C-terminal Ala or Gly residue in this protein. In terms of biological role, cyclic nucleotide synthase (second messenger synthase) of a CBASS antivirus system. CBASS (cyclic oligonucleotide-based antiphage signaling system) provides immunity against bacteriophages. The CD-NTase protein (DncV, this protein) synthesizes cyclic nucleotides in response to infection; these serve as specific second messenger signals. The signals activate a diverse range of effectors, leading to bacterial cell death and thus abortive phage infection. A type II-A(GA) CBASS system. Functionally, catalyzes the synthesis of 3',3'-cyclic GMP-AMP (cGAMP) from GTP and ATP, a second messenger in cell signal transduction. Its product controls the activity of cGAMP-activated phospholipase CapV, a patatin-like lipase that is a direct cGAMP receptor encoded in the dncV operon. Its function is as follows. Protects E.coli against phage infection. When capV and dncV are introduced in E.coli MG1655 there is 1000-fold protection against phage P1; protection against other phage (T2, T4, T5, T6 and lambda-vir) requires the 2 subsequent genes (cap2 and cap3). In another paper the capV-dncV-cap2-cap3 operon gives 10(4)-10(5)-fold protection against phages lambda, T2, T4 and T6, about 1000-fold protection against P1 and 10-fold protection against T5. The protein is Cyclic GMP-AMP synthase of Escherichia coli (strain TW11681).